The primary structure comprises 215 residues: Probable GTP-binding protein EngB (215 aa).

An EngB-type G domain is found at 26–200; it reads EGIEVAFAGR…RAKLDEWFAP (175 aa). Residues 34–41, 61–65, 79–82, 146–149, and 179–181 contribute to the GTP site; these read GRSNAGKS, GRTQL, DLPG, TKAD, and FSS. 2 residues coordinate Mg(2+): Ser41 and Thr63.

The protein belongs to the TRAFAC class TrmE-Era-EngA-EngB-Septin-like GTPase superfamily. EngB GTPase family. Mg(2+) is required as a cofactor.

Necessary for normal cell division and for the maintenance of normal septation. This chain is Probable GTP-binding protein EngB, found in Aliivibrio fischeri (strain MJ11) (Vibrio fischeri).